Consider the following 119-residue polypeptide: Thioredoxin H4 (119 aa).

Positions 2–115 (AAEEGQVIGC…LQAKIVKHTG (114 aa)) constitute a Thioredoxin domain. Catalysis depends on nucleophile residues Cys40 and Cys43. A disulfide bond links Cys40 and Cys43.

The protein belongs to the thioredoxin family. Plant H-type subfamily. As to quaternary structure, interacts with MDH1.

It localises to the cytoplasm. In terms of biological role, thiol-disulfide oxidoreductase probably involved in the redox regulation of a number of cytosolic enzymes. Possesses insulin disulfide bonds reducing activity. This chain is Thioredoxin H4 (TRX4), found in Arabidopsis thaliana (Mouse-ear cress).